Here is a 314-residue protein sequence, read N- to C-terminus: Ribosomal RNA small subunit methyltransferase H (314 aa).

S-adenosyl-L-methionine-binding positions include 36–38, D56, F80, D102, and Q109; that span reads GGH.

Belongs to the methyltransferase superfamily. RsmH family.

It is found in the cytoplasm. It carries out the reaction cytidine(1402) in 16S rRNA + S-adenosyl-L-methionine = N(4)-methylcytidine(1402) in 16S rRNA + S-adenosyl-L-homocysteine + H(+). In terms of biological role, specifically methylates the N4 position of cytidine in position 1402 (C1402) of 16S rRNA. The sequence is that of Ribosomal RNA small subunit methyltransferase H from Citrobacter koseri (strain ATCC BAA-895 / CDC 4225-83 / SGSC4696).